The primary structure comprises 33 residues: Maurocalcin (33 aa).

Intrachain disulfides connect Cys3–Cys17, Cys10–Cys21, and Cys16–Cys32. The essential for stimulation of [3H]ryanodine binding to RYR stretch occupies residues 22-24; that stretch reads KRR.

It belongs to the scorpion calcin family. In terms of processing, the non-natural D-maurocalcin (a chiral analog of maurocalcin composed of D-amino acids) completely loses the ability to stimulate [3H]ryanodine binding and calcium release. Its protease resistance, combined with its efficient cell penetration at concentrations devoid of cell toxicity, suggests that it should be an excellent vector for in vivo applications. In terms of tissue distribution, expressed by the venom gland.

The protein resides in the secreted. Functionally, this toxin stabilizes ryanodine receptor 1 (RyR1) opening in a long-lasting subconductance state (48%-60% of the full conductance state). Furthermore, it triggers calcium release from sarcoplasmic vesicles (6.6 nM are enough to induce a sharp release, and 60% of the total calcium is released after toxin (100 nM) addition) probably by acting as a cell-penetrating peptide (CPP). In addition, it has been shown to dose-dependently stimulate ryanodine binding to RyR1 (EC(50)=12.5-26.4 nM). It also augments the bell-shaped calcium-[3H]ryanodine binding curve that is maximal at about 10 uM calcium concentration. It binds a different site as ryanodine. It acts synergistically with caffeine. In vivo, intracerebroventricular injection into mice causes death. This chain is Maurocalcin, found in Scorpio palmatus (Israeli golden scorpion).